We begin with the raw amino-acid sequence, 278 residues long: Biotin synthase (278 aa).

The Radical SAM core domain maps to 1–227 (MQIMLCAISN…QSVVMVAGGR (227 aa)). [4Fe-4S] cluster-binding residues include C16, C20, and C23. [2Fe-2S] cluster contacts are provided by C60, C95, and C153.

It belongs to the radical SAM superfamily. Biotin synthase family. As to quaternary structure, homodimer. [4Fe-4S] cluster serves as cofactor. [2Fe-2S] cluster is required as a cofactor.

The enzyme catalyses (4R,5S)-dethiobiotin + (sulfur carrier)-SH + 2 reduced [2Fe-2S]-[ferredoxin] + 2 S-adenosyl-L-methionine = (sulfur carrier)-H + biotin + 2 5'-deoxyadenosine + 2 L-methionine + 2 oxidized [2Fe-2S]-[ferredoxin]. The protein operates within cofactor biosynthesis; biotin biosynthesis; biotin from 7,8-diaminononanoate: step 2/2. Its function is as follows. Catalyzes the conversion of dethiobiotin (DTB) to biotin by the insertion of a sulfur atom into dethiobiotin via a radical-based mechanism. This Campylobacter jejuni subsp. jejuni serotype O:6 (strain 81116 / NCTC 11828) protein is Biotin synthase.